Here is a 1043-residue protein sequence, read N- to C-terminus: Ras guanine nucleotide exchange factor S (1043 aa).

Residues 109-142 (IETLQTQRRQSTLNIQALQINNELQQQLQQQQQL) are a coiled coil. Low complexity-rich tracts occupy residues 135-145 (QLQQQQQLPPI), 245-258 (LSPL…GLSS), 266-281 (SKNQ…NSSS), and 293-307 (NNNN…SNSS). Disordered stretches follow at residues 135 to 160 (QLQQ…TSTI) and 245 to 316 (LSPL…HQSQ). The stretch at 404–434 (LAVSLQNVEGLQNIAENLEDETLNLLDLVNE) forms a coiled coil. Positions 645-768 (KDGSILKVTL…LLRGLLDKMI (124 aa)) constitute an N-terminal Ras-GEF domain. The region spanning 803–1043 (SAQSIAQQLT…YDLSIALEPK (241 aa)) is the Ras-GEF domain.

Its function is as follows. Promotes the exchange of Ras-bound GDP by GTP. This Dictyostelium discoideum (Social amoeba) protein is Ras guanine nucleotide exchange factor S (gefS).